A 130-amino-acid polypeptide reads, in one-letter code: uncharacterized protein (130 aa).

Residue M1 is modified to N-acetylmethionine.

As to quaternary structure, homotetramer.

This is an uncharacterized protein from Arabidopsis thaliana (Mouse-ear cress).